Here is a 542-residue protein sequence, read N- to C-terminus: Protein lin-9 homolog (542 aa).

Residue Ala-2 is modified to N-acetylalanine. Residue Lys-21 forms a Glycyl lysine isopeptide (Lys-Gly) (interchain with G-Cter in SUMO2) linkage. 2 positions are modified to phosphoserine: Ser-65 and Ser-95. Phosphothreonine is present on residues Thr-96 and Thr-304. Ser-309 and Ser-321 each carry phosphoserine.

Belongs to the lin-9 family. In terms of assembly, component of the DREAM complex (also named LINC complex) at least composed of E2F4, E2F5, LIN9, LIN37, LIN52, LIN54, MYBL1, MYBL2, RBL1, RBL2, RBBP4, TFDP1 and TFDP2. The complex exists in quiescent cells where it represses cell cycle-dependent genes. It dissociates in S phase when LIN9, LIN37, LIN52 and LIN54 form a subcomplex that binds to MYBL2. Interacts with RB1.

The protein resides in the nucleus. The protein localises to the nucleoplasm. Functionally, acts as a tumor suppressor. Inhibits DNA synthesis. Its ability to inhibit oncogenic transformation is mediated through its association with RB1. Plays a role in the expression of genes required for the G1/S transition. This Mus musculus (Mouse) protein is Protein lin-9 homolog (Lin9).